The following is a 279-amino-acid chain: Energy-coupling factor transporter ATP-binding protein EcfA1 (279 aa).

The ABC transporter domain occupies 6–240 (VRLEHVFYKY…ADAMRAIGLG (235 aa)). 40-47 (GHNGSGKS) contributes to the ATP binding site.

It belongs to the ABC transporter superfamily. Energy-coupling factor EcfA family. As to quaternary structure, forms a stable energy-coupling factor (ECF) transporter complex composed of 2 membrane-embedded substrate-binding proteins (S component), 2 ATP-binding proteins (A component) and 2 transmembrane proteins (T component).

The protein resides in the cell membrane. Functionally, ATP-binding (A) component of a common energy-coupling factor (ECF) ABC-transporter complex. Unlike classic ABC transporters this ECF transporter provides the energy necessary to transport a number of different substrates. The sequence is that of Energy-coupling factor transporter ATP-binding protein EcfA1 from Listeria innocua serovar 6a (strain ATCC BAA-680 / CLIP 11262).